Consider the following 197-residue polypeptide: NADH-quinone oxidoreductase subunit C (197 aa).

Belongs to the complex I 30 kDa subunit family. As to quaternary structure, NDH-1 is composed of 14 different subunits. Subunits NuoB, C, D, E, F, and G constitute the peripheral sector of the complex.

It localises to the cell inner membrane. It catalyses the reaction a quinone + NADH + 5 H(+)(in) = a quinol + NAD(+) + 4 H(+)(out). In terms of biological role, NDH-1 shuttles electrons from NADH, via FMN and iron-sulfur (Fe-S) centers, to quinones in the respiratory chain. The immediate electron acceptor for the enzyme in this species is believed to be ubiquinone. Couples the redox reaction to proton translocation (for every two electrons transferred, four hydrogen ions are translocated across the cytoplasmic membrane), and thus conserves the redox energy in a proton gradient. The polypeptide is NADH-quinone oxidoreductase subunit C (Neisseria meningitidis serogroup A / serotype 4A (strain DSM 15465 / Z2491)).